Reading from the N-terminus, the 118-residue chain is MEKPQIELPVGPAPEDLVISDIIVGEGAEARPGGEVEVHYVGVDFETGEEFDSSWDRGQTSQFPLNGLIAGWQEGIPGMKVGGRRQLTIPPEAAYGPEGSGHPLSGRTLVFIIDLISA.

Residues 33–118 enclose the PPIase FKBP-type domain; that stretch reads GGEVEVHYVG…LVFIIDLISA (86 aa).

The protein belongs to the FKBP-type PPIase family.

The enzyme catalyses [protein]-peptidylproline (omega=180) = [protein]-peptidylproline (omega=0). In terms of biological role, PPIases accelerate the folding of proteins. The polypeptide is Probable FK506-binding protein (Corynebacterium glutamicum (strain ATCC 13032 / DSM 20300 / JCM 1318 / BCRC 11384 / CCUG 27702 / LMG 3730 / NBRC 12168 / NCIMB 10025 / NRRL B-2784 / 534)).